The following is a 184-amino-acid chain: MGNSLFKGFSKPFSRLFSNKEMRILMLGLDAAGKTTILYKLKLNQSVVTIPTVGFNVETVTYKNIKFNVWDVGGQDKIRPLWRHYFTGTKGLIFVVDSADSNRISEARQELHRIISDREMRDCLLLVLANKQDLPGALSPAQITDVLQLDKLKDRLWNVQPTCALTGDGLLEGLAWLSQNAKLK.

A lipid anchor (N-myristoyl glycine) is attached at glycine 2. GTP is bound by residues 28–35, 71–75, and 130–133; these read GLDAAGKT, DVGGQ, and NKQD.

It belongs to the small GTPase superfamily. Arf family.

Its subcellular location is the cell membrane. Functionally, GTP-binding protein that functions as a molecular switch for the activation of 'new end take off' (NETO), a process in which the directions of cell growth change from a monopolar manner to a bipolar manner in fission yeast. Involved in supplying membrane to the growing new end. The chain is ADP-ribosylation factor 6 (arf6) from Schizosaccharomyces pombe (strain 972 / ATCC 24843) (Fission yeast).